The primary structure comprises 1185 residues: Ovostatin homolog 1 (1185 aa).

A signal peptide spans 1–21 (MHVHVCVCLCVCIYTSSCVCA). N-linked (GlcNAc...) asparagine glycosylation is found at Asn80, Asn155, Asn347, Asn452, and Asn725.

Belongs to the protease inhibitor I39 (alpha-2-macroglobulin) family. In terms of assembly, homotetramer.

Its subcellular location is the secreted. Functionally, is able to inhibit all four classes of proteinases by a unique 'trapping' mechanism. This Homo sapiens (Human) protein is Ovostatin homolog 1 (OVOS1).